Consider the following 398-residue polypeptide: Mannitol-1-phosphate 5-dehydrogenase (398 aa).

An NAD(+)-binding site is contributed by 10–21 (AVHFGAGNIGRG). Residue Lys-221 is part of the active site.

Belongs to the mannitol dehydrogenase family. As to quaternary structure, monomer.

The catalysed reaction is D-mannitol 1-phosphate + NAD(+) = beta-D-fructose 6-phosphate + NADH + H(+). In terms of biological role, catalyzes the NAD(H)-dependent interconversion of D-fructose 6-phosphate and D-mannitol 1-phosphate in the mannitol metabolic pathway. The protein is Mannitol-1-phosphate 5-dehydrogenase of Neurospora crassa (strain ATCC 24698 / 74-OR23-1A / CBS 708.71 / DSM 1257 / FGSC 987).